We begin with the raw amino-acid sequence, 417 residues long: Lipoyl synthase, mitochondrial (417 aa).

Residues 1–30 constitute a mitochondrion transit peptide; that stretch reads MATSIPRSRCFLTSSTLKVVPRSRTPLRSF. The disordered stretch occupies residues 23-62; it reads SRTPLRSFATTSDTPQTSVPEAPGKRSRPPTSFSDTLNAG. 2 stretches are compositionally biased toward polar residues: residues 30–41 and 51–61; these read FATTSDTPQTSV and PPTSFSDTLNA. Positions 132, 137, 143, 163, 167, 170, and 378 each coordinate [4Fe-4S] cluster. The region spanning 146 to 367 is the Radical SAM core domain; the sequence is GSSKSAATAT…RQRALDMGFL (222 aa).

Belongs to the radical SAM superfamily. Lipoyl synthase family. It depends on [4Fe-4S] cluster as a cofactor.

The protein localises to the mitochondrion. It catalyses the reaction [[Fe-S] cluster scaffold protein carrying a second [4Fe-4S](2+) cluster] + N(6)-octanoyl-L-lysyl-[protein] + 2 oxidized [2Fe-2S]-[ferredoxin] + 2 S-adenosyl-L-methionine + 4 H(+) = [[Fe-S] cluster scaffold protein] + N(6)-[(R)-dihydrolipoyl]-L-lysyl-[protein] + 4 Fe(3+) + 2 hydrogen sulfide + 2 5'-deoxyadenosine + 2 L-methionine + 2 reduced [2Fe-2S]-[ferredoxin]. Its pathway is protein modification; protein lipoylation via endogenous pathway; protein N(6)-(lipoyl)lysine from octanoyl-[acyl-carrier-protein]: step 2/2. Catalyzes the radical-mediated insertion of two sulfur atoms into the C-6 and C-8 positions of the octanoyl moiety bound to the lipoyl domains of lipoate-dependent enzymes, thereby converting the octanoylated domains into lipoylated derivatives. The protein is Lipoyl synthase, mitochondrial of Pyrenophora tritici-repentis (strain Pt-1C-BFP) (Wheat tan spot fungus).